The sequence spans 255 residues: Zinc import ATP-binding protein ZnuC 1 (255 aa).

Residues 7–220 (IRLQDVTVKI…PAFINLFGTQ (214 aa)) enclose the ABC transporter domain. ATP is bound at residue 39 to 46 (GPNGAGKS). The segment at 229 to 255 (HHHHDHHHHTDGTVAAGSECSHGDQHA) is disordered.

This sequence belongs to the ABC transporter superfamily. Zinc importer (TC 3.A.1.15.5) family. In terms of assembly, the complex is composed of two ATP-binding proteins (ZnuC), two transmembrane proteins (ZnuB) and a solute-binding protein (ZnuA).

It localises to the cell inner membrane. It carries out the reaction Zn(2+)(out) + ATP(in) + H2O(in) = Zn(2+)(in) + ADP(in) + phosphate(in) + H(+)(in). Functionally, part of the ABC transporter complex ZnuABC involved in zinc import. Responsible for energy coupling to the transport system. The chain is Zinc import ATP-binding protein ZnuC 1 from Hahella chejuensis (strain KCTC 2396).